The primary structure comprises 417 residues: Gamma-glutamyl phosphate reductase (417 aa).

It belongs to the gamma-glutamyl phosphate reductase family.

The protein resides in the cytoplasm. The enzyme catalyses L-glutamate 5-semialdehyde + phosphate + NADP(+) = L-glutamyl 5-phosphate + NADPH + H(+). It participates in amino-acid biosynthesis; L-proline biosynthesis; L-glutamate 5-semialdehyde from L-glutamate: step 2/2. Catalyzes the NADPH-dependent reduction of L-glutamate 5-phosphate into L-glutamate 5-semialdehyde and phosphate. The product spontaneously undergoes cyclization to form 1-pyrroline-5-carboxylate. This is Gamma-glutamyl phosphate reductase from Streptococcus agalactiae serotype Ia (strain ATCC 27591 / A909 / CDC SS700).